The following is a 96-amino-acid chain: Large ribosomal subunit protein uL18m (96 aa).

It belongs to the universal ribosomal protein uL18 family.

It is found in the mitochondrion. This is Large ribosomal subunit protein uL18m (RPL18) from Reclinomonas americana.